Reading from the N-terminus, the 215-residue chain is Octanoyltransferase (215 aa).

One can recognise a BPL/LPL catalytic domain in the interval 31-206 (PDSQDEIWLV…QLVKHLDYAE (176 aa)). Substrate contacts are provided by residues 70-77 (RGGQVTYH), 137-139 (SLG), and 150-152 (GLA). Cysteine 168 functions as the Acyl-thioester intermediate in the catalytic mechanism.

It belongs to the LipB family.

Its subcellular location is the cytoplasm. The enzyme catalyses octanoyl-[ACP] + L-lysyl-[protein] = N(6)-octanoyl-L-lysyl-[protein] + holo-[ACP] + H(+). It functions in the pathway protein modification; protein lipoylation via endogenous pathway; protein N(6)-(lipoyl)lysine from octanoyl-[acyl-carrier-protein]: step 1/2. Catalyzes the transfer of endogenously produced octanoic acid from octanoyl-acyl-carrier-protein onto the lipoyl domains of lipoate-dependent enzymes. Lipoyl-ACP can also act as a substrate although octanoyl-ACP is likely to be the physiological substrate. The protein is Octanoyltransferase of Pseudomonas putida (strain GB-1).